The sequence spans 364 residues: Aminomethyltransferase (364 aa).

Belongs to the GcvT family. In terms of assembly, the glycine cleavage system is composed of four proteins: P, T, L and H.

It catalyses the reaction N(6)-[(R)-S(8)-aminomethyldihydrolipoyl]-L-lysyl-[protein] + (6S)-5,6,7,8-tetrahydrofolate = N(6)-[(R)-dihydrolipoyl]-L-lysyl-[protein] + (6R)-5,10-methylene-5,6,7,8-tetrahydrofolate + NH4(+). Functionally, the glycine cleavage system catalyzes the degradation of glycine. The chain is Aminomethyltransferase from Shigella sonnei (strain Ss046).